We begin with the raw amino-acid sequence, 457 residues long: Heme sensor protein HssS (457 aa).

Helical transmembrane passes span 9 to 29 (IAIYSITVILFSALISFVLTN) and 164 to 184 (TFLAVLLMLLLFISISLVIAS). One can recognise an HAMP domain in the interval 186-238 (YSIIRPVKKLKLATERLIDGDFETPIKQTRKDEIGTLQYHFNKMRESLGQVDQ). The 211-residue stretch at 246-456 (NVSHEIKTPL…TFTITLPNNS (211 aa)) folds into the Histidine kinase domain. The residue at position 249 (His249) is a Phosphohistidine; by autocatalysis.

Autophosphorylated.

Its subcellular location is the cell membrane. The enzyme catalyses ATP + protein L-histidine = ADP + protein N-phospho-L-histidine.. In terms of biological role, member of the two-component regulatory system HssS/HssR involved in intracellular heme homeostasis and tempering of staphylococcal virulence. HssS functions as a heme sensor histidine kinase which is autophosphorylated at a histidine residue and transfers its phosphate group to an aspartate residue of HssR. HssR/HssS activates the expression of hrtAB, an efflux pump, in response to extracellular heme, hemin, hemoglobin or blood. The polypeptide is Heme sensor protein HssS (hssS) (Staphylococcus aureus (strain USA300)).